Here is a 1410-residue protein sequence, read N- to C-terminus: Pogo transposable element with ZNF domain (1410 aa).

Positions 238 to 291 (RSTVPQSQSQQTKSTPSTSTTPTATQPTSLGQLAVQSPGQSNQTTNPKLAPSFP) are disordered. The segment covering 239 to 266 (STVPQSQSQQTKSTPSTSTTPTATQPTS) has biased composition (low complexity). A compositionally biased stretch (polar residues) spans 267 to 284 (LGQLAVQSPGQSNQTTNP). Lys-319 participates in a covalent cross-link: Glycyl lysine isopeptide (Lys-Gly) (interchain with G-Cter in SUMO2). Residues 332–361 (QSPGPVVVSNNSSAHGSQRTSGPESSMKVT) form a disordered region. At Ser-333 the chain carries Phosphoserine. Over residues 345-361 (AHGSQRTSGPESSMKVT) the composition is skewed to polar residues. Residue Lys-359 forms a Glycyl lysine isopeptide (Lys-Gly) (interchain with G-Cter in SUMO2) linkage. Ser-363 carries the post-translational modification Phosphoserine. The segment at 375–397 (KICPRCNAQFRVTEALRGHMCYC) adopts a C2H2-type 1; atypical zinc-finger fold. The interval 409–456 (KSLDSEPSVPSAAKPPSPEKTAPVASTPSSTPIPALSPPTKVPEPNEN) is disordered. Lys-422 is covalently cross-linked (Glycyl lysine isopeptide (Lys-Gly) (interchain with G-Cter in SUMO2)). Residue Ser-425 is modified to Phosphoserine. Phosphothreonine is present on Thr-439. Ser-445 bears the Phosphoserine mark. Lys-449 participates in a covalent cross-link: Glycyl lysine isopeptide (Lys-Gly) (interchain with G-Cter in SUMO2). A Phosphothreonine modification is found at Thr-463. Lys-489 participates in a covalent cross-link: Glycyl lysine isopeptide (Lys-Gly) (interchain with G-Cter in SUMO2). C2H2-type zinc fingers lie at residues 494–516 (FRCP…MKHH), 530–553 (TICQ…ENVH), 560–583 (TKCK…KDTH), 590–613 (YVCQ…RMIH), 619–641 (LLCP…YMRH), and 647–670 (YHCN…LQHH). Residue Lys-629 forms a Glycyl lysine isopeptide (Lys-Gly) (interchain with G-Cter in SUMO2) linkage. Lys-677 participates in a covalent cross-link: Glycyl lysine isopeptide (Lys-Gly) (interchain with G-Cter in SUMO2). The tract at residues 693–715 (SRGQPRTVPVSSNDTPPSALQEA) is disordered. Residues 701-710 (PVSSNDTPPS) show a composition bias toward polar residues. The segment at 771 to 794 (VHCSLCRYSTCCSRAYANHMINNH) adopts a C2H2-type 8 zinc-finger fold. Lys-801 participates in a covalent cross-link: Glycyl lysine isopeptide (Lys-Gly) (interchain with G-Cter in SUMO2). Positions 810–850 (VSGIKLACTSCTFVTSVGDAMAKHLVFNPSHRSSSILPRGL) are required for interaction with CBX5. The segment at 815–840 (LACTSCTFVTSVGDAMAKHLVFNPSH) adopts a C2H2-type 9 zinc-finger fold. The residue at position 856 (Ser-856) is a Phosphoserine. Disordered regions lie at residues 857-927 (RHGQ…PQAL) and 942-969 (VDDQ…GVGK). Residues 860–870 (QTRDRVHDRNV) are compositionally biased toward basic and acidic residues. Lys-883 participates in a covalent cross-link: Glycyl lysine isopeptide (Lys-Gly) (interchain with G-Cter in SUMO2). Residues 892–915 (ATPAEPEELLTPLAPALPSPASTA) are compositionally biased toward low complexity. Residues 1015-1085 (GENLEGKYLS…MLRHHLTPHA (71 aa)) form the HTH CENPB-type domain. One can recognise a DDE-1 domain in the interval 1117–1323 (LPLSMIVAID…DCPELVQRSF (207 aa)). At Ser-1338 the chain carries Phosphoserine. A coiled-coil region spans residues 1340–1360 (TRNADMQEELIASLEEQLKLS). Residues 1360-1400 (SGEHSESSTPRPRSSPEETIEPESLHQLFEGESETESFYGF) are disordered. Ser-1364 and Ser-1367 each carry phosphoserine. Thr-1368 carries the post-translational modification Phosphothreonine. Phosphoserine occurs at positions 1373 and 1374. Thr-1378 carries the post-translational modification Phosphothreonine. An Integrase domain-binding motif (IBM) motif is present at residues 1380 to 1404 (EPESLHQLFEGESETESFYGFEEAD). At Ser-1392 the chain carries Phosphoserine; by CK2. Thr-1394 bears the Phosphothreonine mark. Residue Ser-1396 is modified to Phosphoserine; by CK2.

Interacts with CBX1, CBX3, MAD2L2 and CHAMP1. Interacts with CBX5; POGZ competes with PXVXL motif-containing proteins such as INCENP and TRIM28 for interaction with CBX5. Interacts (via IBM motif) with PSIP1 isoform 1 (via IBD domain); phosphorylation increases its affinity for PSIP1. Interacts with HDGFL2. Phosphorylation increases its interaction with PSIP1.

The protein resides in the nucleus. Its subcellular location is the chromosome. It is found in the cytoplasm. In terms of biological role, plays a role in mitotic cell cycle progression and is involved in kinetochore assembly and mitotic sister chromatid cohesion. Probably through its association with CBX5 plays a role in mitotic chromosome segregation by regulating aurora kinase B/AURKB activation and AURKB and CBX5 dissociation from chromosome arms. Promotes the repair of DNA double-strand breaks through the homologous recombination pathway. This chain is Pogo transposable element with ZNF domain (POGZ), found in Homo sapiens (Human).